The primary structure comprises 456 residues: MRSSWIKPRLGKDNVTQMNFARNGYITEEMDFVAKKENLPPSLIMEEVARGRLIIPANINHLNLEPMSIGVASRCKVNANIGASPNASDINEEVEKLKLAVKYGADTVMDLSTGGVNLDEVRQAIIQESPVPIGTVPVYQALESVHGSIDRLTEDDFLHIIEKHCQQGVDYQTIHAGLLIEHLPKVKGRITGIVSRGGGILAQWMLHHFKQNPLYTRFDDICEIFKKYDCTFSLGDSLRPGCLHDASDDAQLAELKTLGELTRRAWEHNVQVMVEGPGHVPMDQIEFNVRKQMEECSEAPFYVLGPLVTDISPGYDHISSAIGAAMAGWYGTSMLCYVTPKEHLGLPNAEDVREGLIAYKIAAHAADIARHRAGARDRDDELSHARYNFDWNKQFELSLDPERAKQYHDETLPEEIFKKAEFCSMCGPKHCPMNSKISDESLDQLKDKLEECSTSA.

Residues N80, M109, Y139, H175, 195–197 (SRG), 236–239 (DSLR), and E275 contribute to the substrate site. Position 279 (H279) interacts with Zn(2+). Position 302 (Y302) interacts with substrate. Position 343 (H343) interacts with Zn(2+). [4Fe-4S] cluster-binding residues include C423, C426, and C431.

Belongs to the ThiC family. The cofactor is [4Fe-4S] cluster.

The enzyme catalyses 5-amino-1-(5-phospho-beta-D-ribosyl)imidazole + S-adenosyl-L-methionine = 4-amino-2-methyl-5-(phosphooxymethyl)pyrimidine + CO + 5'-deoxyadenosine + formate + L-methionine + 3 H(+). It participates in cofactor biosynthesis; thiamine diphosphate biosynthesis. In terms of biological role, catalyzes the synthesis of the hydroxymethylpyrimidine phosphate (HMP-P) moiety of thiamine from aminoimidazole ribotide (AIR) in a radical S-adenosyl-L-methionine (SAM)-dependent reaction. This chain is Phosphomethylpyrimidine synthase, found in Prochlorococcus marinus (strain MIT 9301).